A 364-amino-acid polypeptide reads, in one-letter code: DNA replication and repair protein RecF (364 aa).

G30–T37 contributes to the ATP binding site.

This sequence belongs to the RecF family.

It is found in the cytoplasm. In terms of biological role, the RecF protein is involved in DNA metabolism; it is required for DNA replication and normal SOS inducibility. RecF binds preferentially to single-stranded, linear DNA. It also seems to bind ATP. This chain is DNA replication and repair protein RecF, found in Pseudoalteromonas translucida (strain TAC 125).